We begin with the raw amino-acid sequence, 316 residues long: Insulin-like growth factor-binding protein 2 (316 aa).

An N-terminal signal peptide occupies residues 1–29 (MLPRLGGTALSLLPLLLLLLGTGGRGARA). The IGFBP N-terminal domain maps to 31 to 126 (VLFRCPPCTP…VLGEGTCEKR (96 aa)). Disulfide bonds link Cys35–Cys76, Cys38–Cys78, Cys46–Cys79, Cys68–Cys82, Cys90–Cys103, and Cys97–Cys123. The segment at 189 to 217 (QHRQMGKGGKHHLGLEEPKKLRPPPARTP) is disordered. In terms of domain architecture, Thyroglobulin type-1 spans 215-297 (RTPCQQELDQ…APTIRGDPEC (83 aa)). 3 disulfides stabilise this stretch: Cys218–Cys252, Cys263–Cys274, and Cys276–Cys297. Positions 292–294 (RGD) match the Cell attachment site motif.

In terms of assembly, interacts with IGF1. Interacts with IGF2. Interacts (via RGD motif) with integrin alpha5/ITGA5; this interaction induces cell migration, adhesion or apoptosis according to the context. Interacts with PTPRB; this interaction leads to PTPRB dimerization and inactivation. In terms of processing, cleaved by MMP9 leading to release of free IGF2 from IGFBP2-IGF2 complex, which contributes to enhance the motility and the growth of astrocytes. O-glycosylated.

The protein localises to the secreted. May have both growth-inhibiting and growth-promoting effects, depending on tissue type; increases IGF-induced DNA synthesis in the uterine epithelium. IGF-binding proteins prolong the half-life of the IGFs and have been shown to either inhibit or stimulate the growth promoting effects of the IGFs on cell culture. They alter the interaction of IGFs with their cell surface receptors. Its function is as follows. Multifunctional protein that plays a critical role in regulating the availability of IGFs such as IGF1 and IGF2 to their receptors and thereby regulates IGF-mediated cellular processes including proliferation, differentiation, and apoptosis in a cell-type specific manner. Functions coordinately with receptor protein tyrosine phosphatase beta/PTPRB and the IGF1 receptor to regulate IGF1-mediated signaling by stimulating the phosphorylation of PTEN leading to its inactivation and AKT1 activation. Plays a positive role in cell migration via interaction with integrin alpha5/ITGA5 through an RGD motif. Additionally, interaction with ITGA5/ITGB1 enhances the adhesion of endothelial progenitor cells to endothelial cells. Upon mitochondrial damage, facilitates apoptosis with ITGA5 of podocytes, and then activates the phosphorylation of focal adhesion kinase (FAK)-mediated mitochondrial injury. This chain is Insulin-like growth factor-binding protein 2 (IGFBP2), found in Sus scrofa (Pig).